The primary structure comprises 177 residues: uncharacterized protein (177 aa).

It to M.jannaschii MJ0628.

This is an uncharacterized protein from Methanocaldococcus jannaschii (strain ATCC 43067 / DSM 2661 / JAL-1 / JCM 10045 / NBRC 100440) (Methanococcus jannaschii).